The following is a 259-amino-acid chain: Ribosomal RNA small subunit methyltransferase J (259 aa).

Residues 101 to 102, 117 to 118, 153 to 154, and Asp176 each bind S-adenosyl-L-methionine; these read RD, ER, and SS.

The protein belongs to the methyltransferase superfamily. RsmJ family.

Its subcellular location is the cytoplasm. It catalyses the reaction guanosine(1516) in 16S rRNA + S-adenosyl-L-methionine = N(2)-methylguanosine(1516) in 16S rRNA + S-adenosyl-L-homocysteine + H(+). Its function is as follows. Specifically methylates the guanosine in position 1516 of 16S rRNA. This chain is Ribosomal RNA small subunit methyltransferase J, found in Aliivibrio fischeri (strain MJ11) (Vibrio fischeri).